Reading from the N-terminus, the 395-residue chain is Type II restriction enzyme BsuFI (395 aa).

In terms of assembly, homodimer. Requires Mg(2+) as cofactor.

The enzyme catalyses Endonucleolytic cleavage of DNA to give specific double-stranded fragments with terminal 5'-phosphates.. Functionally, a P subtype restriction enzyme that recognizes the double-stranded sequence 5'-CCGG-3' and cleaves after C-1. The polypeptide is Type II restriction enzyme BsuFI (hsdFR) (Bacillus subtilis).